The sequence spans 391 residues: Multidrug resistance protein MdtL (391 aa).

12 helical membrane-spanning segments follow: residues 4-24 (FLICSFALVLLYPAGIDMYLV), 42-62 (IAFSVYLAGMAAAMLFAGKVA), 69-89 (PVAIPGAALFIIASVFCSLAE), 93-113 (LFLAGRFLQGLGAGCCYVVAF), 131-151 (LLNGITCIIPVLAPVLGHLIM), 158-178 (SLFWTMATMGIAVLMLSLFIL), 203-222 (FFLSRVVITTLSVSVILTFV), 245-265 (ALTAGVSMTVSFSTPFALGIF), 269-289 (TLMITSQVLFLAAGITLAVSP), 293-313 (VSLFGITLICAGFSVGFGVAM), 331-351 (LGIAQVCGSSLWIWLAAVVGI), and 356-376 (MLIGILIACSIVSLLLIMFVA).

This sequence belongs to the major facilitator superfamily. DHA1 family. MdtL (TC 2.A.1.2.22) subfamily.

It localises to the cell inner membrane. Functionally, confers resistance to chloramphenicol. This Escherichia coli (strain SMS-3-5 / SECEC) protein is Multidrug resistance protein MdtL.